The chain runs to 478 residues: Proline--tRNA ligase (478 aa).

Belongs to the class-II aminoacyl-tRNA synthetase family. ProS type 3 subfamily. As to quaternary structure, homodimer.

Its subcellular location is the cytoplasm. It carries out the reaction tRNA(Pro) + L-proline + ATP = L-prolyl-tRNA(Pro) + AMP + diphosphate. Functionally, catalyzes the attachment of proline to tRNA(Pro) in a two-step reaction: proline is first activated by ATP to form Pro-AMP and then transferred to the acceptor end of tRNA(Pro). The protein is Proline--tRNA ligase of Clostridium botulinum (strain Kyoto / Type A2).